The chain runs to 354 residues: MVSALLRTILVTGGAGYIGSHTVLQLLQLGFRVVVLDNLDNASELAILRVRELAGHNANNLDFRKVDLRDKQALDQIFSSQRFEAVIHFAGLKAVGESVQKPLLYYDNNLIGTITLLQVMAAHGCTKLVFSSSATVYGWPKEVPCTEESPLCAMNPYGRTKLVIEDMCRDLHASDPNWKIILLRYFNPVGAHPSGYIGEDPCGIPNNLMPFVQQVAVGRRPALTVYGTDYNTKDGTGVRDYIHVVDLADGHIAALRKLYEDSDRIGCEVYNLGTGKGTSVLEMVAAFEKASGKKIPLVFAGRRPGDAEIVYAQTAKAEKELKWKAKYGVEEMCRDLWNWASKNPYGYGSPDSSN.

Residue Thr-8 to Leu-39 coordinates NAD(+). Position 133 (Ser-133) interacts with substrate. Tyr-157 serves as the catalytic Proton acceptor.

This sequence belongs to the NAD(P)-dependent epimerase/dehydratase family. Requires NAD(+) as cofactor.

The catalysed reaction is UDP-alpha-D-glucose = UDP-alpha-D-galactose. It participates in carbohydrate metabolism; galactose metabolism. Catalyzes the interconversion between UDP-glucose and UDP-galactose. The polypeptide is UDP-glucose 4-epimerase 1 (UGE-1) (Oryza sativa subsp. japonica (Rice)).